The chain runs to 313 residues: Pyrimidine-specific ribonucleoside hydrolase RihB (313 aa).

The Proton acceptor role is filled by Asp11. Residues Asp11, Asp16, and Val124 each coordinate Ca(2+). Positions 227 and 239 each coordinate substrate. Asp240 is a binding site for Ca(2+).

Belongs to the IUNH family. RihB subfamily. In terms of assembly, homotetramer. It depends on Ca(2+) as a cofactor.

It carries out the reaction a pyrimidine ribonucleoside + H2O = a pyrimidine nucleobase + D-ribose. In terms of biological role, hydrolyzes cytidine or uridine to ribose and cytosine or uracil, respectively. Has a clear preference for cytidine over uridine. Strictly specific for ribonucleosides. This is Pyrimidine-specific ribonucleoside hydrolase RihB from Escherichia coli O157:H7.